A 284-amino-acid chain; its full sequence is L-ribulose-5-phosphate 3-epimerase UlaE (284 aa).

It belongs to the L-ribulose-5-phosphate 3-epimerase family.

It catalyses the reaction L-ribulose 5-phosphate = L-xylulose 5-phosphate. The protein operates within cofactor degradation; L-ascorbate degradation; D-xylulose 5-phosphate from L-ascorbate: step 3/4. Functionally, catalyzes the isomerization of L-xylulose-5-phosphate to L-ribulose-5-phosphate. Is involved in the anaerobic L-ascorbate utilization. In Salmonella paratyphi A (strain AKU_12601), this protein is L-ribulose-5-phosphate 3-epimerase UlaE.